The primary structure comprises 398 residues: Transposase for insertion sequence element ISRM5 (398 aa).

Belongs to the transposase mutator family.

In terms of biological role, required for the transposition of the insertion element. The sequence is that of Transposase for insertion sequence element ISRM5 from Rhizobium meliloti (strain 1021) (Ensifer meliloti).